Reading from the N-terminus, the 124-residue chain is Large ribosomal subunit protein bL12 (124 aa).

Belongs to the bacterial ribosomal protein bL12 family. Homodimer. Part of the ribosomal stalk of the 50S ribosomal subunit. Forms a multimeric L10(L12)X complex, where L10 forms an elongated spine to which 2 to 4 L12 dimers bind in a sequential fashion. Binds GTP-bound translation factors.

Forms part of the ribosomal stalk which helps the ribosome interact with GTP-bound translation factors. Is thus essential for accurate translation. This is Large ribosomal subunit protein bL12 from Burkholderia ambifaria (strain MC40-6).